Here is a 286-residue protein sequence, read N- to C-terminus: Bifunctional protein FolD (286 aa).

NADP(+) contacts are provided by residues 165 to 167 (GRS), Ser190, and Val231.

This sequence belongs to the tetrahydrofolate dehydrogenase/cyclohydrolase family. As to quaternary structure, homodimer.

It catalyses the reaction (6R)-5,10-methylene-5,6,7,8-tetrahydrofolate + NADP(+) = (6R)-5,10-methenyltetrahydrofolate + NADPH. The catalysed reaction is (6R)-5,10-methenyltetrahydrofolate + H2O = (6R)-10-formyltetrahydrofolate + H(+). It participates in one-carbon metabolism; tetrahydrofolate interconversion. In terms of biological role, catalyzes the oxidation of 5,10-methylenetetrahydrofolate to 5,10-methenyltetrahydrofolate and then the hydrolysis of 5,10-methenyltetrahydrofolate to 10-formyltetrahydrofolate. The protein is Bifunctional protein FolD of Bacillus anthracis (strain A0248).